The following is a 206-amino-acid chain: Uridine kinase (206 aa).

ATP is bound at residue 11–18 (GGSGSGKT).

Belongs to the uridine kinase family.

It localises to the cytoplasm. It carries out the reaction uridine + ATP = UMP + ADP + H(+). It catalyses the reaction cytidine + ATP = CMP + ADP + H(+). The protein operates within pyrimidine metabolism; CTP biosynthesis via salvage pathway; CTP from cytidine: step 1/3. It functions in the pathway pyrimidine metabolism; UMP biosynthesis via salvage pathway; UMP from uridine: step 1/1. The protein is Uridine kinase of Macrococcus caseolyticus (strain JCSC5402) (Macrococcoides caseolyticum).